The following is an 87-amino-acid chain: Acyl carrier protein TtuC (87 aa).

Positions 11–87 (ITAEDVQQWL…HALSQFIAAK (77 aa)) constitute a Carrier domain. S48 carries the O-(pantetheine 4'-phosphoryl)serine modification.

Requires pantetheine 4'-phosphate as cofactor.

Carrier protein likely involved in the biosynthesis of a polyyne metabolite. Accepts as substrate the activated form of decanoic acid from TtuA. The sequence is that of Acyl carrier protein TtuC from Teredinibacter turnerae (strain ATCC 39867 / T7901).